A 130-amino-acid polypeptide reads, in one-letter code: MATKTAARVRKKVKKNVAEGIAHIHASFNNTIVTITDRQGNALSWATAGGAGFKGSRKSTPFAAQVAAENAGKMAQEYGVKNLEVRIKGPGPGRESTVRALNALGFKIVAISDVTPIPHNGCRPSKKRRI.

The protein belongs to the universal ribosomal protein uS11 family. Part of the 30S ribosomal subunit. Interacts with proteins S7 and S18. Binds to IF-3.

Its function is as follows. Located on the platform of the 30S subunit, it bridges several disparate RNA helices of the 16S rRNA. Forms part of the Shine-Dalgarno cleft in the 70S ribosome. The protein is Small ribosomal subunit protein uS11 of Thiobacillus denitrificans (strain ATCC 25259 / T1).